We begin with the raw amino-acid sequence, 459 residues long: Protein U54 (459 aa).

Residues 1-20 form the signal peptide; that stretch reads MQPATLQWSSYVLQLRLTTA. N-linked (GlcNAc...) asparagine; by host glycosylation is found at Asn-76, Asn-100, Asn-281, Asn-321, and Asn-452.

Belongs to the herpesviridae UL82 family.

The polypeptide is Protein U54 (U54) (Homo sapiens (Human)).